A 485-amino-acid chain; its full sequence is Catalase isozyme 1 (485 aa).

Active-site residues include His58 and Asn131. Residue Tyr341 participates in heme binding.

Belongs to the catalase family. In terms of assembly, homotetramer. The cofactor is heme.

Its subcellular location is the peroxisome. It catalyses the reaction 2 H2O2 = O2 + 2 H2O. Its function is as follows. Occurs in almost all aerobically respiring organisms and serves to protect cells from the toxic effects of hydrogen peroxide. The sequence is that of Catalase isozyme 1 (CAT1) from Nicotiana plumbaginifolia (Leadwort-leaved tobacco).